We begin with the raw amino-acid sequence, 279 residues long: Probable ribosomal RNA small subunit methyltransferase A (279 aa).

Residues Asn-23, Leu-25, Gly-50, Glu-71, Asp-95, and Asn-110 each contribute to the S-adenosyl-L-methionine site.

Belongs to the class I-like SAM-binding methyltransferase superfamily. rRNA adenine N(6)-methyltransferase family. RsmA subfamily.

The protein localises to the cytoplasm. Specifically dimethylates two adjacent adenosines in the loop of a conserved hairpin near the 3'-end of 16S rRNA in the 30S particle. May play a critical role in biogenesis of 30S subunits. The sequence is that of Probable ribosomal RNA small subunit methyltransferase A from Thermococcus kodakarensis (strain ATCC BAA-918 / JCM 12380 / KOD1) (Pyrococcus kodakaraensis (strain KOD1)).